A 126-amino-acid polypeptide reads, in one-letter code: Small ribosomal subunit protein uS11 (126 aa).

It belongs to the universal ribosomal protein uS11 family. In terms of assembly, part of the 30S ribosomal subunit. Interacts with proteins S7 and S18. Binds to IF-3.

Located on the platform of the 30S subunit, it bridges several disparate RNA helices of the 16S rRNA. Forms part of the Shine-Dalgarno cleft in the 70S ribosome. This chain is Small ribosomal subunit protein uS11, found in Orientia tsutsugamushi (strain Boryong) (Rickettsia tsutsugamushi).